The primary structure comprises 153 residues: Aspartate carbamoyltransferase regulatory chain (153 aa).

The Zn(2+) site is built by C109, C114, C138, and C141.

Belongs to the PyrI family. Contains catalytic and regulatory chains. Zn(2+) serves as cofactor.

Functionally, involved in allosteric regulation of aspartate carbamoyltransferase. In Vibrio vulnificus (strain YJ016), this protein is Aspartate carbamoyltransferase regulatory chain.